Consider the following 579-residue polypeptide: Extracellular serine/threonine protein kinase FAM20C (579 aa).

Topologically, residues 1–10 are cytoplasmic; the sequence is MKMILVRRFR. The propeptide occupies 1 to 87; that stretch reads MKMILVRRFR…PNKHTLRILQ (87 aa). The chain crosses the membrane as a helical; Signal-anchor for type II membrane protein span at residues 11–31; that stretch reads VLILVVFLLACALHIAVDLLP. Residues 32-579 are Lumenal-facing; the sequence is KLDRRATRSS…ATEHRASTER (548 aa). Positions 38 to 79 are disordered; the sequence is TRSSGEPGCSCAQPAAEAAGPGWAQARSRPGESAGGDAGWPN. Low complexity predominate over residues 49 to 63; it reads AQPAAEAAGPGWAQA. An N-linked (GlcNAc...) asparagine glycan is attached at N96. The interval 104–155 is disordered; that stretch reads KLPSAAEPVDHAPRGQEPRSPPPRDPAHRPLLRDPGPRPRVPPPGPSGDGSL. Basic and acidic residues-rich tracts occupy residues 111–120 and 128–140; these read PVDHAPRGQE and DPAHRPLLRDPGP. The ATP site is built by Q264, K280, and E301. A Mn(2+)-binding site is contributed by E301. The interval 349–560 is kinase domain; that stretch reads FVSPANNICF…AVRDCVEKDG (212 aa). 2 cysteine pairs are disulfide-bonded: C357–C373 and C362–C366. Position 384–387 (384–387) interacts with ATP; it reads AAFL. Cystine bridges form between C421/C495 and C496/C555. D453 is an active-site residue. Positions 458 and 473 each coordinate ATP. Position 473 (D473) interacts with Mn(2+).

The protein belongs to the FAM20 family. In terms of assembly, homodimer; disulfide-linked. Interacts with FAM20A; probably forming a heterotetramer of 2 subunits of FAM20A and 2 subunits of FAM20C. Interacts with COPII components SEC23A and SEC24A; transport of FAM20C from the endoplasmic reticulum to the Golgi is likely to be mediated by COPII vesicles. The cofactor is Mn(2+). Post-translationally, N-glycosylation is required for folding. In terms of processing, autophosphorylated. Propeptide cleavage by MBTPS1/S1P promotes FAM20C secretion and maximal kinase activity which is essential for efficient osteoblast differentiation and biomineralization. As to expression, in the mammary gland, expressed at higher levels in lactating mice than in virgin mice (at protein level). Highly expressed in the tooth. No expression in the dental pulp. At the secretory stage of amelogenesis, it is detected in the matrix of the enamel, in the ameloblasts, and within the cells adjoining the stratum intermedium (a tissue layer analogous to the stellate reticulum seen in the developing molar). Strong expression is observed in maturation stage ameloblasts and throughout the non-cornified layers of the gingival epithelium. Expressed at moderate levels in bone and at low levels in kidney, liver, brain and lung. Very low expression, if any, in spleen and skeletal muscle.

The protein localises to the golgi apparatus membrane. The protein resides in the secreted. Its subcellular location is the endoplasmic reticulum. The enzyme catalyses L-seryl-[protein] + ATP = O-phospho-L-seryl-[protein] + ADP + H(+). It carries out the reaction L-threonyl-[protein] + ATP = O-phospho-L-threonyl-[protein] + ADP + H(+). Its activity is regulated as follows. Serine/threonine protein kinase activity is increased upon interaction with FAM20A. Golgi serine/threonine protein kinase that phosphorylates secretory pathway proteins within Ser-x-Glu/pSer motifs and plays a key role in biomineralization of bones and teeth. Constitutes the main protein kinase for extracellular proteins, generating the majority of the extracellular phosphoproteome. Mainly phosphorylates proteins within the Ser-x-Glu/pSer motif, but also displays a broader substrate specificity. Phosphorylates ERO1A, enhancing its activity which is required to maintain endoplasmic reticulum redox homeostasis and for oxidative protein folding. During endoplasmic reticulum stress, phosphorylates P4HB/PDIA1 which induces a functional switch, causing P4HB to change from an oxidoreductase to a molecular chaperone. This is critical to maintain ER proteostasis and reduce cell death under ER stress. Phosphorylation of P4HB also promotes its interaction with ERN1, leading to reduced activity of ERN1, a key sensor for the endoplasmic reticulum unfolded protein response. Required for osteoblast differentiation and mineralization. Phosphorylates casein as well as a number of proteins involved in biomineralization such as AMELX, AMTN, ENAM and SPP1. In addition to its role in biomineralization, also plays a role in lipid homeostasis, wound healing and cell migration and adhesion. This Mus musculus (Mouse) protein is Extracellular serine/threonine protein kinase FAM20C.